A 216-amino-acid polypeptide reads, in one-letter code: Calcium-binding protein 2 (216 aa).

The tract at residues M1 to T41 is disordered. G2 is lipidated: N-myristoyl glycine. The segment covering P20–P29 has biased composition (low complexity). EF-hand domains lie at E74–M109, G125–A142, I148–E183, and L185–R216. 5 residues coordinate Ca(2+): D87, D89, D91, Y93, and E98. 9 residues coordinate Ca(2+): D161, N163, D165, C167, E172, D198, N200, D202, and E209.

Expressed in the inner hair cells (IHCs), outer hair cells,(OHCs) and vestibular hair cells within the ear and in the retina (at protein level). Expressed in the retinal cone type 6 ON-bipolar cells and type 1 OFF-bipolar cells (at protein level). Expressed in the organ of Corti and spiral ganglion neurons in the cochlea (at protein level).

The protein localises to the cytoplasm. The protein resides in the perinuclear region. It localises to the cell membrane. Its subcellular location is the golgi apparatus. In terms of biological role, required for sound encoding at inner hair cells (IHCs) synapses, likely via inhibition of the inactivation of voltage-gated calcium channel of type 1.3 (Cav1.3) in the IHCs. Required for the normal transfer of light signals through the retina. This Mus musculus (Mouse) protein is Calcium-binding protein 2 (Cabp2).